A 158-amino-acid polypeptide reads, in one-letter code: Transcriptional regulator MraZ (158 aa).

SpoVT-AbrB domains follow at residues I5–Y50 and A91–E134.

Belongs to the MraZ family. Forms oligomers.

The protein resides in the cytoplasm. The protein localises to the nucleoid. The chain is Transcriptional regulator MraZ from Geobacter metallireducens (strain ATCC 53774 / DSM 7210 / GS-15).